A 177-amino-acid chain; its full sequence is Cell division protein ZapC (177 aa).

Belongs to the ZapC family. As to quaternary structure, interacts directly with FtsZ.

The protein resides in the cytoplasm. Functionally, contributes to the efficiency of the cell division process by stabilizing the polymeric form of the cell division protein FtsZ. Acts by promoting interactions between FtsZ protofilaments and suppressing the GTPase activity of FtsZ. This Shewanella frigidimarina (strain NCIMB 400) protein is Cell division protein ZapC.